We begin with the raw amino-acid sequence, 1964 residues long: Neurogenic locus notch homolog protein 4 (1964 aa).

A signal peptide spans 1-20; it reads MQPQLLLLLLLPLNFPVILT. EGF-like domains follow at residues 21-60, 61-112, 115-152, and 153-189; these read RELL…ETCQ, FPDP…DRCQ, LEEL…EQCQ, and LRDF…HTCE. Residues 21-1443 lie on the Extracellular side of the membrane; the sequence is RELLCGGSPE…TRPSANQLPW (1423 aa). Disulfide bonds link Cys25–Cys38, Cys32–Cys48, Cys50–Cys59, Cys65–Cys77, Cys71–Cys100, Cys102–Cys111, Cys119–Cys130, Cys124–Cys140, Cys142–Cys151, Cys157–Cys168, Cys162–Cys177, Cys179–Cys188, Cys195–Cys208, Cys202–Cys217, Cys219–Cys228, Cys235–Cys246, Cys240–Cys259, Cys261–Cys270, Cys277–Cys288, Cys282–Cys297, Cys299–Cys308, Cys315–Cys329, Cys323–Cys338, Cys340–Cys349, Cys356–Cys367, Cys361–Cys376, Cys378–Cys387, Cys393–Cys404, Cys398–Cys415, Cys417–Cys426, Cys433–Cys449, Cys443–Cys458, Cys460–Cys469, Cys476–Cys487, Cys481–Cys496, Cys498–Cys507, Cys514–Cys525, Cys519–Cys534, Cys536–Cys545, Cys552–Cys563, Cys557–Cys572, Cys574–Cys583, Cys590–Cys601, Cys595–Cys610, Cys612–Cys621, Cys626–Cys637, Cys631–Cys646, Cys648–Cys655, Cys662–Cys669, Cys664–Cys674, Cys676–Cys685, Cys692–Cys703, Cys697–Cys712, Cys714–Cys723, Cys730–Cys741, Cys735–Cys750, Cys752–Cys761, Cys768–Cys779, Cys773–Cys788, Cys790–Cys799, Cys807–Cys818, Cys812–Cys827, Cys829–Cys838, Cys845–Cys856, Cys850–Cys865, Cys867–Cys876, Cys882–Cys903, Cys897–Cys912, Cys914–Cys923, Cys930–Cys941, Cys935–Cys950, Cys952–Cys961, Cys968–Cys979, Cys973–Cys988, Cys990–Cys999, Cys1006–Cys1019, Cys1011–Cys1028, Cys1030–Cys1039, Cys1046–Cys1057, Cys1051–Cys1069, Cys1071–Cys1080, Cys1087–Cys1098, Cys1092–Cys1110, Cys1112–Cys1121, Cys1130–Cys1142, Cys1136–Cys1155, Cys1157–Cys1166, Cys1174–Cys1187, Cys1183–Cys1199, Cys1210–Cys1234, Cys1216–Cys1229, Cys1225–Cys1241, Cys1247–Cys1273, Cys1255–Cys1268, and Cys1264–Cys1280. Positions 191-229 constitute an EGF-like 5; calcium-binding domain; it reads DINECFLEPGPCPQGTSCHNTLGSYQCLCPVGQEGPQCK. Residues 231–271 enclose the EGF-like 6 domain; sequence RKGACPPGSCLNGGTCQLVPEGHSTFHLCLCPPGFTGLDCE. An EGF-like 7; calcium-binding domain is found at 273–309; that stretch reads NPDDCVRHQCQNGATCLDGLDTYTCLCPKTWKGWDCS. Positions 311–350 constitute an EGF-like 8; calcium-binding domain; it reads DIDECEARGPPRCRNGGTCQNTAGSFHCVCVSGWGGAGCE. Positions 352 to 388 constitute an EGF-like 9; calcium-binding domain; that stretch reads NLDDCAAATCAPGSTCIDRVGSFSCLCPPGRTGLLCH. One can recognise an EGF-like 10 domain in the interval 389–427; sequence LEDMCLSQPCHVNAQCSTNPLTGSTLCICQPGYSGSTCH. Residues 429-470 form the EGF-like 11; calcium-binding domain; that stretch reads DLDECQMAQQGPSPCEHGGSCINTPGSFNCLCLPGYTGSRCE. The 37-residue stretch at 472–508 folds into the EGF-like 12; calcium-binding domain; the sequence is DHNECLSQPCHPGSTCLDLLATFHCLCPPGLEGRLCE. Residues 510–546 enclose the EGF-like 13; calcium-binding domain; the sequence is EVNECTSNPCLNQAACHDLLNGFQCLCLPGFTGARCE. The EGF-like 14; calcium-binding domain occupies 548–584; the sequence is DMDECSSTPCANGGRCRDQPGAFYCECLPGFEGPHCE. One can recognise an EGF-like 15; calcium-binding domain in the interval 586–622; that stretch reads EVDECLSDPCPVGASCLDLPGAFFCLCRPGFTGQLCE. EGF-like domains are found at residues 623-656, 658-686, 688-724, 726-762, 764-800, 803-839, 841-877, 878-924, 926-962, 964-1000, 1002-1040, 1042-1081, 1083-1122, and 1126-1167; these read VPLC…PGCV, AEDN…PECE, ELGG…LTCS, EVTA…RHCQ, AVDH…LHCE, TNPS…SSCQ, LIDL…ALCD, FPLS…KLCQ, NVNP…QNCS, VLDA…LRCE, DVDE…QRCE, EMDL…PTCS, KALS…PDCL, and APPG…PRCQ. Asn711 is a glycosylation site (N-linked (GlcNAc...) asparagine). An N-linked (GlcNAc...) asparagine glycan is attached at Asn960. The N-linked (GlcNAc...) asparagine glycan is linked to Asn1139. LNR repeat units follow at residues 1166–1209, 1210–1241, and 1247–1287; these read CQRP…PWKG, CPPH…GYDC, and CIPA…GEDS. The interval 1345–1369 is disordered; it reads EELSGARDSSSWERQAPPTQPLGKE. A helical membrane pass occupies residues 1444–1464; it reads PILCSPVVGVLLLALGALLVL. At 1465–1964 the chain is on the cytoplasmic side; the sequence is QLIRRRRREH…PLNSVVRNLN (500 aa). A disordered region spans residues 1516-1535; it reads VDEDGVAMCSGPEEGEAEET. 5 ANK repeats span residues 1628–1657, 1661–1691, 1695–1724, 1728–1757, and 1761–1790; these read TGET…NPNQ, AGRT…TVDA, DGTT…DVGA, RGKT…DKDA, and REQT…ARGL. The segment at 1879 to 1907 is disordered; sequence RSGSCGGPTTRGRRFSAGSRGRRGARASQ.

This sequence belongs to the NOTCH family. As to quaternary structure, heterodimer of a C-terminal fragment N(TM) and a N-terminal fragment N(EC) which are probably linked by disulfide bonds. Interacts with MAML1, MAML2 and MAML3 which act as transcriptional coactivators for NOTCH4. In terms of processing, synthesized in the endoplasmic reticulum as an inactive form which is proteolytically cleaved by a furin-like convertase in the trans-Golgi network before it reaches the plasma membrane to yield an active, ligand-accessible form. Cleavage results in a C-terminal fragment N(TM) and a N-terminal fragment N(EC). Following ligand binding, it is cleaved by TNF-alpha converting enzyme (TACE) to yield a membrane-associated intermediate fragment called notch extracellular truncation (NEXT). This fragment is then cleaved by presenilin dependent gamma-secretase to release a notch-derived peptide containing the intracellular domain (NICD) from the membrane. Phosphorylated. As to expression, highly expressed in lung, moderately in heart kidney, and at lower levels in the ovary and skeletal muscle. A very low expression is seen in the brain, intestine, liver and testis.

It localises to the cell membrane. It is found in the nucleus. Functions as a receptor for membrane-bound ligands Jagged1, Jagged2 and Delta1 to regulate cell-fate determination. Upon ligand activation through the released notch intracellular domain (NICD) it forms a transcriptional activator complex with RBPJ/RBPSUH and activates genes of the enhancer of split locus. Affects the implementation of differentiation, proliferation and apoptotic programs. May regulate branching morphogenesis in the developing vascular system. The sequence is that of Neurogenic locus notch homolog protein 4 from Mus musculus (Mouse).